Reading from the N-terminus, the 950-residue chain is Protocadherin alpha-3 (950 aa).

The N-terminal stretch at 1–29 (MLFSWREDPGAQCLLLSLLLLAASEVGSG) is a signal peptide. Cadherin domains follow at residues 30–133 (QLHY…APVF), 134–242 (PMSV…APAF), 243–350 (ERTI…VPEL), 351–455 (VIHS…APAF), 456–565 (SQSE…APAL), and 581–678 (VPRS…APKA). Residues 30–697 (QLHYSVSEEA…GPEAALVDVN (668 aa)) are Extracellular-facing. 2 N-linked (GlcNAc...) asparagine glycosylation sites follow: asparagine 257 and asparagine 265. A glycan (N-linked (GlcNAc...) asparagine) is linked at asparagine 548. A helical membrane pass occupies residues 698–718 (VYLIVAICAVSSLLVLTLLLY). Over 719–950 (TALRCSAPPT…GNSTTDNSDQ (232 aa)) the chain is Cytoplasmic. 2 PXXP repeats span residues 734 to 737 (PGKP) and 774 to 777 (PSLP). The tract at residues 734-894 (PGKPTLVCSS…PDKFIIPGSP (161 aa)) is 6 X 4 AA repeats of P-X-X-P. Disordered regions lie at residues 777–806 (PPCP…NPDW), 831–856 (GPGG…EVSP), and 869–889 (FKYG…DKFI). The span at 782-797 (SRDREEKQDVDVDLSA) shows a compositional bias: basic and acidic residues. 4 PXXP repeats span residues 799 to 802 (PRQP), 832 to 835 (PGGP), 873 to 876 (PGNP), and 891 to 894 (PGSP). The segment at 901–950 (QEPANSQIDKSDFITFGKKEETKKKKKKKKGNKTQEKKEKGNSTTDNSDQ) is disordered. Basic and acidic residues predominate over residues 909-923 (DKSDFITFGKKEETK).

It is found in the cell membrane. In terms of biological role, potential calcium-dependent cell-adhesion protein. May be involved in the establishment and maintenance of specific neuronal connections in the brain. In Pan troglodytes (Chimpanzee), this protein is Protocadherin alpha-3 (PCDHA3).